The sequence spans 483 residues: GTPase Der (483 aa).

EngA-type G domains lie at 3-167 (FTLA…GEER) and 212-387 (LRIA…EIWN). Residues 9–16 (GRPNVGKS), 56–60 (DTAGL), 119–122 (NKAE), 218–225 (GRPNAGKS), 265–269 (DTAGM), and 330–333 (NKWD) each bind GTP. Residues 388-472 (RRISTGRLNR…PIRLSLRTSD (85 aa)) form the KH-like domain.

The protein belongs to the TRAFAC class TrmE-Era-EngA-EngB-Septin-like GTPase superfamily. EngA (Der) GTPase family. Associates with the 50S ribosomal subunit.

Functionally, GTPase that plays an essential role in the late steps of ribosome biogenesis. This is GTPase Der from Brucella suis (strain ATCC 23445 / NCTC 10510).